The sequence spans 214 residues: Glutathione S-transferase F12 (214 aa).

In terms of domain architecture, GST N-terminal spans 2 to 82 (VVKLYGQVTA…YYATKFADQG (81 aa)). Residues 11–12 (AA), 40–41 (QK), 53–54 (QV), and 66–67 (ES) contribute to the glutathione site. Residues 89–214 (SLEHRAIVDQ…WKKLMVLAGH (126 aa)) form the GST C-terminal domain.

This sequence belongs to the GST superfamily. Phi family.

The protein localises to the cytoplasm. Its subcellular location is the cytosol. It carries out the reaction RX + glutathione = an S-substituted glutathione + a halide anion + H(+). Its function is as follows. Involved in the transport and/or accumulation of both anthocyanins and proanthocyanidins (PA)s in the vacuole. Functions in the cytosol to maintain the regular accumulation in the vacuole of PA precursors, such as epicatechin and glycosylated epicatechin. This is Glutathione S-transferase F12 from Arabidopsis thaliana (Mouse-ear cress).